Here is a 168-residue protein sequence, read N- to C-terminus: NAD(P)H-quinone oxidoreductase subunit J, chloroplastic (168 aa).

Belongs to the complex I 30 kDa subunit family. As to quaternary structure, NDH is composed of at least 16 different subunits, 5 of which are encoded in the nucleus.

It localises to the plastid. The protein resides in the chloroplast thylakoid membrane. It carries out the reaction a plastoquinone + NADH + (n+1) H(+)(in) = a plastoquinol + NAD(+) + n H(+)(out). The enzyme catalyses a plastoquinone + NADPH + (n+1) H(+)(in) = a plastoquinol + NADP(+) + n H(+)(out). Functionally, NDH shuttles electrons from NAD(P)H:plastoquinone, via FMN and iron-sulfur (Fe-S) centers, to quinones in the photosynthetic chain and possibly in a chloroplast respiratory chain. The immediate electron acceptor for the enzyme in this species is believed to be plastoquinone. Couples the redox reaction to proton translocation, and thus conserves the redox energy in a proton gradient. The chain is NAD(P)H-quinone oxidoreductase subunit J, chloroplastic from Chaetosphaeridium globosum (Charophycean green alga).